The sequence spans 105 residues: Pyrimidine/purine nucleoside phosphorylase (105 aa).

This sequence belongs to the nucleoside phosphorylase PpnP family.

It carries out the reaction a purine D-ribonucleoside + phosphate = a purine nucleobase + alpha-D-ribose 1-phosphate. The enzyme catalyses adenosine + phosphate = alpha-D-ribose 1-phosphate + adenine. It catalyses the reaction cytidine + phosphate = cytosine + alpha-D-ribose 1-phosphate. The catalysed reaction is guanosine + phosphate = alpha-D-ribose 1-phosphate + guanine. It carries out the reaction inosine + phosphate = alpha-D-ribose 1-phosphate + hypoxanthine. The enzyme catalyses thymidine + phosphate = 2-deoxy-alpha-D-ribose 1-phosphate + thymine. It catalyses the reaction uridine + phosphate = alpha-D-ribose 1-phosphate + uracil. The catalysed reaction is xanthosine + phosphate = alpha-D-ribose 1-phosphate + xanthine. Functionally, catalyzes the phosphorolysis of diverse nucleosides, yielding D-ribose 1-phosphate and the respective free bases. Can use uridine, adenosine, guanosine, cytidine, thymidine, inosine and xanthosine as substrates. Also catalyzes the reverse reactions. The protein is Pyrimidine/purine nucleoside phosphorylase of Delftia acidovorans (strain DSM 14801 / SPH-1).